Reading from the N-terminus, the 208-residue chain is Thioesterase 1/protease 1/lysophospholipase L1 (208 aa).

Residues Met-1–Ala-26 form the signal peptide. Residue Ser-36 is the Nucleophile of the active site. Residues Gly-70 and Asn-99 each contribute to the substrate site. Active-site residues include Asp-180 and His-183.

The protein belongs to the 'GDSL' lipolytic enzyme family. Monomer or homotetramer.

Its subcellular location is the periplasm. The catalysed reaction is a fatty acyl-CoA + H2O = a fatty acid + CoA + H(+). The enzyme catalyses hexadecanoyl-CoA + H2O = hexadecanoate + CoA + H(+). It catalyses the reaction (9Z)-hexadecenoyl-CoA + H2O = (9Z)-hexadecenoate + CoA + H(+). It carries out the reaction octadecanoyl-CoA + H2O = octadecanoate + CoA + H(+). The catalysed reaction is (9Z)-octadecenoyl-CoA + H2O = (9Z)-octadecenoate + CoA + H(+). The enzyme catalyses (9Z)-octadecenoyl-[ACP] + H2O = (9Z)-octadecenoate + holo-[ACP] + H(+). It catalyses the reaction (11Z)-octadecenoyl-CoA + H2O = (11Z)-octadecenoate + CoA + H(+). It carries out the reaction tetradecanoyl-CoA + H2O = tetradecanoate + CoA + H(+). The catalysed reaction is (5Z,8Z,11Z,14Z)-eicosatetraenoyl-CoA + H2O = (5Z,8Z,11Z,14Z)-eicosatetraenoate + CoA + H(+). The enzyme catalyses dodecanoyl-CoA + H2O = dodecanoate + CoA + H(+). It catalyses the reaction decanoyl-CoA + H2O = decanoate + CoA + H(+). It carries out the reaction hexanoyl-CoA + H2O = hexanoate + CoA + H(+). The catalysed reaction is a 1-acyl-sn-glycero-3-phosphocholine + H2O = sn-glycerol 3-phosphocholine + a fatty acid + H(+). The enzyme catalyses a phenyl acetate + H2O = a phenol + acetate + H(+). It catalyses the reaction a butanoate ester + H2O = an aliphatic alcohol + butanoate + H(+). It carries out the reaction a hexanoate ester + H2O = an aliphatic alcohol + hexanoate + H(+). The catalysed reaction is an octanoate ester + H2O = an aliphatic alcohol + octanoate + H(+). TesA is a multifunctional esterase that can act as a thioesterase, arylesterase, lysophospholipase and protease. The chain is Thioesterase 1/protease 1/lysophospholipase L1 (tesA) from Escherichia coli O6:H1 (strain CFT073 / ATCC 700928 / UPEC).